We begin with the raw amino-acid sequence, 293 residues long: 33 kDa chaperonin (293 aa).

2 disulfide bridges follow: cysteine 237–cysteine 239 and cysteine 271–cysteine 274.

This sequence belongs to the HSP33 family. Under oxidizing conditions two disulfide bonds are formed involving the reactive cysteines. Under reducing conditions zinc is bound to the reactive cysteines and the protein is inactive.

Its subcellular location is the cytoplasm. In terms of biological role, redox regulated molecular chaperone. Protects both thermally unfolding and oxidatively damaged proteins from irreversible aggregation. Plays an important role in the bacterial defense system toward oxidative stress. In Haemophilus influenzae (strain ATCC 51907 / DSM 11121 / KW20 / Rd), this protein is 33 kDa chaperonin.